The primary structure comprises 434 residues: Glycerol-3-phosphate acyltransferase 3 (434 aa).

Residues 14–34 (WLTLVLGFILLPSVFGVSLGI) traverse the membrane as a helical segment. A phosphoserine mark is found at Ser68 and Ser77. 2 helical membrane passes run 137 to 157 (ISLR…CVLL) and 161 to 181 (VTLA…VGQL). The HXXXXD motif motif lies at 229–234 (HTSPID).

This sequence belongs to the 1-acyl-sn-glycerol-3-phosphate acyltransferase family. Widely expressed. Expressed in liver, kidney, testis, brain, heart, skeletal muscle, thyroid, prostate, thymus and placenta. Also expressed lung and adipose tissue.

It localises to the endoplasmic reticulum membrane. The catalysed reaction is sn-glycerol 3-phosphate + an acyl-CoA = a 1-acyl-sn-glycero-3-phosphate + CoA. It carries out the reaction a 1-acyl-sn-glycero-3-phosphate + an acyl-CoA = a 1,2-diacyl-sn-glycero-3-phosphate + CoA. It catalyses the reaction dodecanoyl-CoA + sn-glycerol 3-phosphate = 1-dodecanoyl-sn-glycerol 3-phosphate + CoA. The enzyme catalyses sn-glycerol 3-phosphate + hexadecanoyl-CoA = 1-hexadecanoyl-sn-glycero-3-phosphate + CoA. The catalysed reaction is sn-glycerol 3-phosphate + (9Z)-octadecenoyl-CoA = 1-(9Z-octadecenoyl)-sn-glycero-3-phosphate + CoA. It carries out the reaction (9Z,12Z)-octadecadienoyl-CoA + sn-glycerol 3-phosphate = 1-(9Z,12Z)-octadecadienoyl-sn-glycero-3-phosphate + CoA. It catalyses the reaction 1-tetradecanoyl-sn-glycerol 3-phosphate + (9Z)-octadecenoyl-CoA = 1-tetradecanoyl-2-(9Z)-octadecenoyl-sn-glycero-3-phosphate + CoA. The enzyme catalyses 1-hexadecanoyl-sn-glycero-3-phosphate + (9Z)-octadecenoyl-CoA = 1-hexadecanoyl-2-(9Z-octadecenoyl)-sn-glycero-3-phosphate + CoA. The catalysed reaction is 1-(9Z-octadecenoyl)-sn-glycero-3-phosphate + (9Z)-octadecenoyl-CoA = 1,2-di-(9Z-octadecenoyl)-sn-glycero-3-phosphate + CoA. It carries out the reaction 1-(6Z,9Z,12Z-octadecatrienoyl)-sn-glycero-3-phosphate + (9Z)-octadecenoyl-CoA = (6Z,9Z,12Z)-octadecatrienoyl-2-(9Z)-octadecenoyl-sn-glycero-3-phosphate + CoA. It catalyses the reaction 1-(9Z,12Z,15Z)-octadecatrienoyl-sn-glycero-3-phosphate + (9Z)-octadecenoyl-CoA = 1-(9Z,12Z,15Z)-octadecatrienoyl-2-(9Z)-octadecenoyl-sn-glycero-3-phosphate + CoA. The enzyme catalyses 1-(9Z-octadecenoyl)-sn-glycero-3-phosphate + tetradecanoyl-CoA = 1-(9Z)-octadecenoyl-2-tetradecanoyl-sn-glycero-3-phosphate + CoA. The catalysed reaction is 1-(9Z-octadecenoyl)-sn-glycero-3-phosphate + hexadecanoyl-CoA = 1-(9Z)-octadecenoyl-2-hexadecanoyl-sn-glycero-3-phosphate + CoA. It carries out the reaction 1-(9Z-octadecenoyl)-sn-glycero-3-phosphate + octadecanoyl-CoA = 1-(9Z-octadecenoyl)-2-octadecanoyl-sn-glycero-3-phosphate + CoA. It catalyses the reaction 1-(9Z-octadecenoyl)-sn-glycero-3-phosphate + (9Z,12Z)-octadecadienoyl-CoA = 1-(9Z)-octadecenoyl-2-(9Z,12Z)-octadecadienoyl-sn-glycero-3-phosphate + CoA. The enzyme catalyses 1-(5Z,8Z,11Z,14Z-eicosatetraenoyl)-sn-glycero-3-phosphate + (9Z)-octadecenoyl-CoA = 1-(5Z,8Z,11Z,14Z)-eicosatetraenoyl-2-(9Z)-octadecenoyl-sn-glycero-3-phosphate + CoA. It participates in glycerolipid metabolism; triacylglycerol biosynthesis. Its pathway is phospholipid metabolism; CDP-diacylglycerol biosynthesis; CDP-diacylglycerol from sn-glycerol 3-phosphate: step 1/3. Inhibited by N-ethylmaleimide (NEM). Functionally, converts glycerol-3-phosphate to 1-acyl-sn-glycerol-3-phosphate (lysophosphatidic acid or LPA) by incorporating an acyl moiety at the sn-1 position of the glycerol backbone. Also converts LPA into 1,2-diacyl-sn-glycerol-3-phosphate (phosphatidic acid or PA) by incorporating an acyl moiety at the sn-2 position of the glycerol backbone. Protects cells against lipotoxicity. This Homo sapiens (Human) protein is Glycerol-3-phosphate acyltransferase 3.